Consider the following 477-residue polypeptide: 3-isopropylmalate dehydratase large subunit (477 aa).

[4Fe-4S] cluster-binding residues include Cys352, Cys413, and Cys416.

The protein belongs to the aconitase/IPM isomerase family. LeuC type 1 subfamily. In terms of assembly, heterodimer of LeuC and LeuD. The cofactor is [4Fe-4S] cluster.

The catalysed reaction is (2R,3S)-3-isopropylmalate = (2S)-2-isopropylmalate. It functions in the pathway amino-acid biosynthesis; L-leucine biosynthesis; L-leucine from 3-methyl-2-oxobutanoate: step 2/4. In terms of biological role, catalyzes the isomerization between 2-isopropylmalate and 3-isopropylmalate, via the formation of 2-isopropylmaleate. The sequence is that of 3-isopropylmalate dehydratase large subunit from Pseudomonas putida (strain ATCC 47054 / DSM 6125 / CFBP 8728 / NCIMB 11950 / KT2440).